Consider the following 201-residue polypeptide: Thiamine transporter ThiT (201 aa).

The next 6 membrane-spanning stretches (helical) occupy residues 7-27, 29-49, 53-73, 85-105, 124-144, and 170-190; these read LVVI…TYIP, TTGV…VLAM, LVPA…LRGI, ILEY…FASF, GIII…VVFW, and TVLT…LFVA.

The protein belongs to the vitamin uptake transporter (VUT/ECF) (TC 2.A.88) family. Thiamine transporter subfamily. In terms of assembly, in Lactococcus lactis subsp. cremoris (strain NZ9000) forms a stable energy-coupling factor (ECF) transporter complex probably composed of a membrane-embedded substrate-binding protein (S component), two ATP-binding proteins (A components) and a transmembrane protein (T component).

The protein localises to the cell membrane. Functionally, thiamine-binding protein that interacts with the energy-coupling factor (ECF) ABC-transporter complex. Unlike classic ABC transporters this ECF transporter provides the energy necessary to transport a number of different substrates. The substrates themselves are bound by transmembrane, not extracytoplasmic soluble proteins and transport it into cells. Binds thiamine with a dissociation constant of 0.5 nM. Upon coexpression with its energy-coupling factor (ECF) ABC-transporter complex EcfA1A2T in Lactococcus lactis subsp. cremoris (strain NZ9000) allows thiamine uptake; uptake requires both ThiT and EcfA1A2T. This chain is Thiamine transporter ThiT (thiT), found in Lacticaseibacillus paracasei (strain ATCC 334 / BCRC 17002 / CCUG 31169 / CIP 107868 / KCTC 3260 / NRRL B-441) (Lactobacillus paracasei).